A 386-amino-acid chain; its full sequence is Nucleosome assembly protein 1-like 4 (386 aa).

Residues 1-29 (MADNSFSDGVPSDSLEAAKNASNTEKLTD) form a disordered region. Position 2 is an N-acetylalanine (alanine 2). Serine 5, serine 7, and serine 12 each carry phosphoserine. Residues 20 to 29 (NASNTEKLTD) are compositionally biased toward polar residues. The residue at position 49 (serine 49) is a Phosphoserine. Threonine 51 bears the Phosphothreonine mark. Phosphoserine occurs at positions 53 and 54. At threonine 58 the chain carries Phosphothreonine. Lysine 105 is subject to N6-acetyllysine. Serine 125 is subject to Phosphoserine. Residue lysine 146 is modified to N6-acetyllysine. The Nuclear localization signal motif lies at 265–271 (IKKKQKH). The residue at position 304 (serine 304) is a Phosphoserine. Acidic residues predominate over residues 339–370 (AIEDDDNFEEGEEGEEEELEGDEEAEDDDDAE). The segment at 339–386 (AIEDDDNFEEGEEGEEEELEGDEEAEDDDDAEINPKKEPSQPSECKQQ) is disordered.

Belongs to the nucleosome assembly protein (NAP) family. In terms of assembly, interacts with core (H2A, H2B, H3, H4) and linker (H1) histones. In terms of processing, polyglutamylated and polyglycylated. These 2 modifications occur exclusively on glutamate residues and result in either polyglutamate or polyglycine chains on the gamma-carboxyl group. Both modifications can coexist on the same protein on adjacent residues, and lowering polyglycylation levels increases polyglutamylation, and reciprocally. Polyglutamylated by TTLL4. Phosphorylated at the G0/G1 boundary but it is not phosphorylated in S-phase. Phosphorylated protein remains in the cytoplasm in a complex with histones during the G0/G1 transition, whereas dephosphorylation triggers its transport into the nucleus at the G1/S-boundary.

The protein resides in the nucleus. It is found in the cytoplasm. In terms of biological role, acts as a histone chaperone in nucleosome assembly. This is Nucleosome assembly protein 1-like 4 (NAP1L4) from Bos taurus (Bovine).